The primary structure comprises 89 residues: Large ribosomal subunit protein bL27 (89 aa).

Positions 1-20 (MAHKKAGGSSRNGRDSIGRR) are disordered.

Belongs to the bacterial ribosomal protein bL27 family.

The chain is Large ribosomal subunit protein bL27 from Ruegeria pomeroyi (strain ATCC 700808 / DSM 15171 / DSS-3) (Silicibacter pomeroyi).